We begin with the raw amino-acid sequence, 142 residues long: Large ribosomal subunit protein uL11 (142 aa).

The protein belongs to the universal ribosomal protein uL11 family. In terms of assembly, part of the ribosomal stalk of the 50S ribosomal subunit. Interacts with L10 and the large rRNA to form the base of the stalk. L10 forms an elongated spine to which L12 dimers bind in a sequential fashion forming a multimeric L10(L12)X complex. One or more lysine residues are methylated.

In terms of biological role, forms part of the ribosomal stalk which helps the ribosome interact with GTP-bound translation factors. In Proteus vulgaris, this protein is Large ribosomal subunit protein uL11.